The sequence spans 97 residues: Core protein A15 homolog (97 aa).

The protein belongs to the chordopoxvirinae A15 family. In terms of assembly, part of a complex composed of A30, G7, F10 kinase, A15, D2, D3, and J1.

The protein resides in the host cytoplasm. The protein localises to the virion. Its function is as follows. Late protein which is a part of a large complex required for early virion morphogenesis. This complex participates in the formation of virosomes and the incorporation of virosomal contents into nascent immature virions. A15 is required for the stability and kinase activity of F10. This Vertebrata (FPV) protein is Core protein A15 homolog.